The following is a 211-amino-acid chain: Soluble inorganic pyrophosphatase PPA1 (211 aa).

Substrate-binding residues include Lys61 and Arg75. The active-site Proton donor is Tyr83. Tyr87 is a substrate binding site. Mg(2+)-binding residues include Asp97, Asp102, and Asp134. Tyr171 lines the substrate pocket.

It belongs to the PPase family. It depends on Mg(2+) as a cofactor.

It is found in the cytoplasm. It catalyses the reaction diphosphate + H2O = 2 phosphate + H(+). With respect to regulation, strongly inhibited by Ca(2+). In terms of biological role, catalyzes the irreversible hydrolysis of pyrophosphate (PPi) to phosphate. In Solanum tuberosum (Potato), this protein is Soluble inorganic pyrophosphatase PPA1.